Reading from the N-terminus, the 404-residue chain is Ubiquitin-like modifier-activating enzyme 5 (404 aa).

ATP is bound by residues Gly83, Asp104, Lys127, Asn150, and Asn184. Residues Cys226 and Cys229 each coordinate Zn(2+). Residue Cys250 is the Glycyl thioester intermediate of the active site. 2 residues coordinate Zn(2+): Cys303 and Cys308. The disordered stretch occupies residues 372–404 (APEKSSETSEETVSAATADETSLEDLMAQMKSM). The segment covering 382 to 391 (ETVSAATADE) has biased composition (low complexity).

The protein belongs to the ubiquitin-activating E1 family. UBA5 subfamily. As to quaternary structure, interacts (via C-terminus) with Ufc1. Interacts with Ufm1.

It is found in the cytoplasm. The protein localises to the nucleus. It localises to the golgi apparatus. In terms of biological role, E1-like enzyme which activates UFM1. In Drosophila melanogaster (Fruit fly), this protein is Ubiquitin-like modifier-activating enzyme 5.